We begin with the raw amino-acid sequence, 347 residues long: Olfactory receptor 13C3 (347 aa).

Topologically, residues 1–55 (MIVQLICTVCFLAVNTFHVRSSFDFLKADDMGEINQTLVSEFLLLGLSGYPKIEI) are extracellular. A glycan (N-linked (GlcNAc...) asparagine) is linked at Asn35. The helical transmembrane segment at 56–76 (VYFALILVMYLVILIGNGVLI) threads the bilayer. Topologically, residues 77 to 84 (IASIFDSH) are cytoplasmic. A helical membrane pass occupies residues 85–105 (FHTPMYFFLGNLSFLDICYTS). The Extracellular portion of the chain corresponds to 106-129 (SSVPSTLVSLISKKRNISFSGCAV). Cys127 and Cys219 are joined by a disulfide. Residues 130–150 (QMFFGFAMGSTECLLLGMMAF) form a helical membrane-spanning segment. Residues 151–169 (DRYVAICNPLRYPIILSKV) lie on the Cytoplasmic side of the membrane. A helical transmembrane segment spans residues 170–190 (AYVLMASVSWLSGGINSAVQT). Residues 191–227 (LLAMRLPFCGNNIINHFACEILAVLKLACADISLNII) lie on the Extracellular side of the membrane. Residues 228-247 (TMVISNMAFLVLPLMVIFFS) traverse the membrane as a helical segment. Residues 248 to 267 (YMFILYTILQMNSATGRRKA) lie on the Cytoplasmic side of the membrane. The chain crosses the membrane as a helical span at residues 268–288 (FSTCSAHLTVVIIFYGTIFFM). Topologically, residues 289-307 (YAKPKSQDLIGEEKLQALD) are extracellular. Residues 308 to 328 (KLISLFYGVVTPMLNPILYSL) form a helical membrane-spanning segment. At 329-347 (RNKDVKAAVKYLLNKKPIH) the chain is on the cytoplasmic side.

The protein belongs to the G-protein coupled receptor 1 family.

Its subcellular location is the cell membrane. Its function is as follows. Odorant receptor. The polypeptide is Olfactory receptor 13C3 (OR13C3) (Homo sapiens (Human)).